A 434-amino-acid polypeptide reads, in one-letter code: Protein translocase subunit SecY (434 aa).

The next 10 helical transmembrane spans lie at 19–39 (LFTL…IPGI), 73–93 (IFML…LLVY), 117–137 (YLTI…AKGI), 148–168 (YIFV…WFGE), 179–199 (TSLI…FNLF), 209–229 (VNPV…ILII), 264–284 (VLPV…LSGF), 300–320 (PNGF…TYFY), 362–382 (FSGS…QNIF), and 391–411 (IMGG…LIHI).

This sequence belongs to the SecY/SEC61-alpha family. In terms of assembly, component of the Sec protein translocase complex. Heterotrimer consisting of SecY, SecE and SecG subunits. The heterotrimers can form oligomers, although 1 heterotrimer is thought to be able to translocate proteins. Interacts with the ribosome. Interacts with SecDF, and other proteins may be involved. Interacts with SecA.

It is found in the cell inner membrane. The central subunit of the protein translocation channel SecYEG. Consists of two halves formed by TMs 1-5 and 6-10. These two domains form a lateral gate at the front which open onto the bilayer between TMs 2 and 7, and are clamped together by SecE at the back. The channel is closed by both a pore ring composed of hydrophobic SecY resides and a short helix (helix 2A) on the extracellular side of the membrane which forms a plug. The plug probably moves laterally to allow the channel to open. The ring and the pore may move independently. The protein is Protein translocase subunit SecY of Borreliella burgdorferi (strain ATCC 35210 / DSM 4680 / CIP 102532 / B31) (Borrelia burgdorferi).